A 349-amino-acid polypeptide reads, in one-letter code: tRNA N6-adenosine threonylcarbamoyltransferase (349 aa).

Positions 115 and 119 each coordinate Fe cation. Substrate contacts are provided by residues 137-141, D170, G183, and N281; that span reads LASGG. D309 provides a ligand contact to Fe cation.

It belongs to the KAE1 / TsaD family. Fe(2+) is required as a cofactor.

It is found in the cytoplasm. The catalysed reaction is L-threonylcarbamoyladenylate + adenosine(37) in tRNA = N(6)-L-threonylcarbamoyladenosine(37) in tRNA + AMP + H(+). In terms of biological role, required for the formation of a threonylcarbamoyl group on adenosine at position 37 (t(6)A37) in tRNAs that read codons beginning with adenine. Is involved in the transfer of the threonylcarbamoyl moiety of threonylcarbamoyl-AMP (TC-AMP) to the N6 group of A37, together with TsaE and TsaB. TsaD likely plays a direct catalytic role in this reaction. This chain is tRNA N6-adenosine threonylcarbamoyltransferase, found in Methylobacterium nodulans (strain LMG 21967 / CNCM I-2342 / ORS 2060).